Reading from the N-terminus, the 305-residue chain is Oxygen-dependent coproporphyrinogen-III oxidase (305 aa).

Ser92 lines the substrate pocket. A divalent metal cation-binding residues include His96 and His106. His106 (proton donor) is an active-site residue. 108–110 (NVR) lines the substrate pocket. The a divalent metal cation site is built by His145 and His175. The interval 239–274 (YVEFNLLFDRGTLFGLQSGGRAESILISLPPLVRWE) is important for dimerization. 257–259 (GGR) is a binding site for substrate.

This sequence belongs to the aerobic coproporphyrinogen-III oxidase family. Homodimer. Requires a divalent metal cation as cofactor.

The protein resides in the cytoplasm. The catalysed reaction is coproporphyrinogen III + O2 + 2 H(+) = protoporphyrinogen IX + 2 CO2 + 2 H2O. The protein operates within porphyrin-containing compound metabolism; protoporphyrin-IX biosynthesis; protoporphyrinogen-IX from coproporphyrinogen-III (O2 route): step 1/1. In terms of biological role, involved in the heme biosynthesis. Catalyzes the aerobic oxidative decarboxylation of propionate groups of rings A and B of coproporphyrinogen-III to yield the vinyl groups in protoporphyrinogen-IX. The polypeptide is Oxygen-dependent coproporphyrinogen-III oxidase (Xylella fastidiosa (strain Temecula1 / ATCC 700964)).